The sequence spans 55 residues: Cytochrome c oxidase subunit 7s (55 aa).

A helical transmembrane segment spans residues 13–35; sequence LVQDIGVALILGSIAGCFFKYGV.

Slime mold cytochrome c oxidase consists of at least seven different polypeptides species, subunits I, II, III, IV, V, VI, and VIIe/s in order of MW.

Its subcellular location is the mitochondrion inner membrane. It catalyses the reaction 4 Fe(II)-[cytochrome c] + O2 + 8 H(+)(in) = 4 Fe(III)-[cytochrome c] + 2 H2O + 4 H(+)(out). This protein is one of the nuclear-coded polypeptide chains of cytochrome c oxidase, the terminal oxidase in mitochondrial electron transport. In Dictyostelium discoideum (Social amoeba), this protein is Cytochrome c oxidase subunit 7s (cxgS).